Consider the following 482-residue polypeptide: Glutamate--tRNA ligase (482 aa).

The 'HIGH' region motif lies at 9–19 (PSPTGPIHVGN). 4 residues coordinate Zn(2+): C106, C108, C133, and D135. Positions 250 to 254 (KLSKR) match the 'KMSKS' region motif. ATP is bound at residue K253.

It belongs to the class-I aminoacyl-tRNA synthetase family. Glutamate--tRNA ligase type 1 subfamily. Monomer. Zn(2+) is required as a cofactor.

The protein resides in the cytoplasm. The catalysed reaction is tRNA(Glu) + L-glutamate + ATP = L-glutamyl-tRNA(Glu) + AMP + diphosphate. Functionally, catalyzes the attachment of glutamate to tRNA(Glu) in a two-step reaction: glutamate is first activated by ATP to form Glu-AMP and then transferred to the acceptor end of tRNA(Glu). The chain is Glutamate--tRNA ligase from Symbiobacterium thermophilum (strain DSM 24528 / JCM 14929 / IAM 14863 / T).